The primary structure comprises 308 residues: Ornithine carbamoyltransferase (308 aa).

Residues S55–T58, Q82, R106, and H133–Q136 each bind carbamoyl phosphate. Residues N164, D227, and S231–M232 each bind L-ornithine. Residues C267 to L268 and R295 contribute to the carbamoyl phosphate site.

It belongs to the aspartate/ornithine carbamoyltransferase superfamily. OTCase family.

Its subcellular location is the cytoplasm. It carries out the reaction carbamoyl phosphate + L-ornithine = L-citrulline + phosphate + H(+). It functions in the pathway amino-acid biosynthesis; L-arginine biosynthesis; L-arginine from L-ornithine and carbamoyl phosphate: step 1/3. Reversibly catalyzes the transfer of the carbamoyl group from carbamoyl phosphate (CP) to the N(epsilon) atom of ornithine (ORN) to produce L-citrulline. This Prochlorococcus marinus subsp. pastoris (strain CCMP1986 / NIES-2087 / MED4) protein is Ornithine carbamoyltransferase.